A 906-amino-acid chain; its full sequence is MSDKAMNLFGARDTLQVPGSDKKLYFYNLNKLQGHDVSRLPVSIKVLLESVLREANDYDVRREDVETVAGWSATNPEVEIPFKPARVILQDFTGVPAVVDLAAMRSAMVKLGGDPSKINPLIPVDLVIDHSVQVDEFGTEFALANNMALEFERNRERYEFLRWGQQAFDNFGVVPPASGIVHQVNLEYLAKGVQSRAEDDGEVVYPDSLVGTDSHTTMINGLGIVGWGVGGIEAEAVMLGQPIYMLMPEVIGFKITGAMPEGATATDLALRVTQMLREKGVVGKFVEFYGAGLSNMTLPDRATIANMAPEYGATMGFFPVDDEALRYLRRTGRLEDEIGLVEAYYKAQGMFRTDETPDPVFTDTIELDLATIVPSLAGPKRPQDRVNLSDMHSVFNEALTAPVKNRGFELGSDKLDAQGTIGGTDIKIGHGAVTLASITSCTNTSNPSVLIAAGLVAKKAVEKGLKTKPWVKTSLAPGSRVVTEYLETAGLQQYLDQIGFNTVGYGCMTCIGNSGPLPEPVVEAIQEGDLVVASVLSGNRNFEGRVNPHIKANYLASPPLVVAYALAGTVVNDIVNDAIGQDSNGQDVFLKDIWPTNAEIQEAMDRSINAEMFKKVYDGIEKSNADWNAIPVAEGALFDWKEDSTYIQNPPFFDTLAGGAHEIESIKGARALVKVGDSVTTDHISPAGSFKADTPAGRYLTERGIAPKDFNSYGSRRGNDRIMTRGTFANIRLKNQLAPGTEGGFTTNFLNGEVTSIFDASTAYKEAGVPLVVLAGKDYGMGSSRDWAAKGTFLLGVKAVIAESFERIHRSNLVGMGVLPLQYKNGETADSLGINGDETFEFVLPGDLKPRQDVTVKVTGKDGNTRDITVMCRIDTPVEIDYYKNGGILQTVLRGILSKSQGEVKA.

Positions M1–S2 are excised as a propeptide. [4Fe-4S] cluster is bound by residues C441, C507, and C510.

It belongs to the aconitase/IPM isomerase family. In terms of assembly, monomer. The cofactor is [4Fe-4S] cluster.

The catalysed reaction is citrate = D-threo-isocitrate. The enzyme catalyses (2S,3R)-3-hydroxybutane-1,2,3-tricarboxylate = 2-methyl-cis-aconitate + H2O. It functions in the pathway carbohydrate metabolism; tricarboxylic acid cycle; isocitrate from oxaloacetate: step 2/2. The protein operates within organic acid metabolism; propanoate degradation. Its function is as follows. Involved in the catabolism of short chain fatty acids (SCFA) via the tricarboxylic acid (TCA)(acetyl degradation route) and probably the 2-methylcitrate cycle I (propionate degradation route). Catalyzes the reversible isomerization of citrate to isocitrate via cis-aconitate. Could catalyze the hydration of 2-methyl-cis-aconitate to yield (2R,3S)-2-methylisocitrate. The apo form of AcnA functions as a RNA-binding regulatory protein. The chain is Aconitate hydratase A (acn) from Deinococcus radiodurans (strain ATCC 13939 / DSM 20539 / JCM 16871 / CCUG 27074 / LMG 4051 / NBRC 15346 / NCIMB 9279 / VKM B-1422 / R1).